Consider the following 633-residue polypeptide: ATP-dependent RNA helicase mss116, mitochondrial (633 aa).

A mitochondrion-targeting transit peptide spans methionine 1 to glycine 32. Positions glutamate 38–isoleucine 66 match the Q motif motif. A Helicase ATP-binding domain is found at isoleucine 70–threonine 248. Proline 83 to histidine 90 contributes to the ATP binding site. The DEAD box signature appears at arginine 195–glutamate 198. The region spanning phenylalanine 262–leucine 429 is the Helicase C-terminal domain. The disordered stretch occupies residues phenylalanine 567–alanine 633.

Belongs to the DEAD box helicase family. DDX18/HAS1 subfamily.

The protein localises to the mitochondrion matrix. The enzyme catalyses ATP + H2O = ADP + phosphate + H(+). Functionally, ATP-dependent RNA helicase required for mitochondrial splicing of group I and II introns. Also required for efficient mitochondrial translation. The chain is ATP-dependent RNA helicase mss116, mitochondrial (mss116) from Aspergillus oryzae (strain ATCC 42149 / RIB 40) (Yellow koji mold).